The following is a 67-amino-acid chain: Probable tautomerase bsl7456 (67 aa).

Proline 2 (proton acceptor; via imino nitrogen) is an active-site residue.

Belongs to the 4-oxalocrotonate tautomerase family.

This Bradyrhizobium diazoefficiens (strain JCM 10833 / BCRC 13528 / IAM 13628 / NBRC 14792 / USDA 110) protein is Probable tautomerase bsl7456.